A 388-amino-acid chain; its full sequence is Transcriptional regulatory protein EmbR (388 aa).

The segment at residues 2-105 is a DNA-binding region (ompR/PhoB-type); it reads AGSATVEKRL…AAPPGYRLSI (104 aa). Residues 308-357 enclose the FHA domain; that stretch reads TRIGRLHDNDIVLDSANVSRHHAVIVDTGTNYVINDLRSSNGVHVQHERI.

It belongs to the AfsR/DnrI/RedD regulatory family. In terms of processing, phosphorylated on threonine residue(s).

In terms of biological role, positively regulates the transcription of the embCAB operon. Exhibits ATPase and GTPase activities. The protein is Transcriptional regulatory protein EmbR (embR) of Mycobacterium bovis (strain ATCC BAA-935 / AF2122/97).